The following is a 492-amino-acid chain: Probable ATP-citrate synthase subunit 2 (492 aa).

Ser-24 bears the Phosphoserine mark.

The protein in the N-terminal section; belongs to the succinate/malate CoA ligase beta subunit family. In the C-terminal section; belongs to the succinate/malate CoA ligase alpha subunit family. As to quaternary structure, composed of two subunits.

It localises to the cytoplasm. The protein localises to the nucleus. The catalysed reaction is oxaloacetate + acetyl-CoA + ADP + phosphate = citrate + ATP + CoA. Functionally, ATP citrate-lyase is the primary enzyme responsible for the synthesis of cytosolic acetyl-CoA. Has a central role in de novo lipid synthesis. This Schizosaccharomyces pombe (strain 972 / ATCC 24843) (Fission yeast) protein is Probable ATP-citrate synthase subunit 2.